A 690-amino-acid polypeptide reads, in one-letter code: Glycine--tRNA ligase beta subunit (690 aa).

Belongs to the class-II aminoacyl-tRNA synthetase family. Tetramer of two alpha and two beta subunits.

Its subcellular location is the cytoplasm. It catalyses the reaction tRNA(Gly) + glycine + ATP = glycyl-tRNA(Gly) + AMP + diphosphate. The protein is Glycine--tRNA ligase beta subunit of Tolumonas auensis (strain DSM 9187 / NBRC 110442 / TA 4).